The chain runs to 1407 residues: DNA-directed RNA polymerase subunit beta' (1407 aa).

Cysteine 70, cysteine 72, cysteine 85, and cysteine 88 together coordinate Zn(2+). Mg(2+) is bound by residues aspartate 460, aspartate 462, and aspartate 464. Positions 814, 888, 895, and 898 each coordinate Zn(2+).

This sequence belongs to the RNA polymerase beta' chain family. In terms of assembly, the RNAP catalytic core consists of 2 alpha, 1 beta, 1 beta' and 1 omega subunit. When a sigma factor is associated with the core the holoenzyme is formed, which can initiate transcription. Requires Mg(2+) as cofactor. The cofactor is Zn(2+).

The catalysed reaction is RNA(n) + a ribonucleoside 5'-triphosphate = RNA(n+1) + diphosphate. DNA-dependent RNA polymerase catalyzes the transcription of DNA into RNA using the four ribonucleoside triphosphates as substrates. This Cellvibrio japonicus (strain Ueda107) (Pseudomonas fluorescens subsp. cellulosa) protein is DNA-directed RNA polymerase subunit beta'.